Reading from the N-terminus, the 376-residue chain is Succinyl-diaminopimelate desuccinylase (376 aa).

Zn(2+) is bound at residue H67. Residue D69 is part of the active site. D100 contributes to the Zn(2+) binding site. Catalysis depends on E134, which acts as the Proton acceptor. E135, E163, and H349 together coordinate Zn(2+).

The protein belongs to the peptidase M20A family. DapE subfamily. As to quaternary structure, homodimer. Zn(2+) serves as cofactor. Co(2+) is required as a cofactor.

The catalysed reaction is N-succinyl-(2S,6S)-2,6-diaminopimelate + H2O = (2S,6S)-2,6-diaminopimelate + succinate. Its pathway is amino-acid biosynthesis; L-lysine biosynthesis via DAP pathway; LL-2,6-diaminopimelate from (S)-tetrahydrodipicolinate (succinylase route): step 3/3. Functionally, catalyzes the hydrolysis of N-succinyl-L,L-diaminopimelic acid (SDAP), forming succinate and LL-2,6-diaminopimelate (DAP), an intermediate involved in the bacterial biosynthesis of lysine and meso-diaminopimelic acid, an essential component of bacterial cell walls. This chain is Succinyl-diaminopimelate desuccinylase, found in Shewanella denitrificans (strain OS217 / ATCC BAA-1090 / DSM 15013).